The following is a 114-amino-acid chain: UPF0757 protein YmgG (114 aa).

The protein belongs to the UPF0757 family.

The sequence is that of UPF0757 protein YmgG from Shigella flexneri.